Consider the following 178-residue polypeptide: Large ribosomal subunit protein uL6 (178 aa).

Belongs to the universal ribosomal protein uL6 family. Part of the 50S ribosomal subunit.

This protein binds to the 23S rRNA, and is important in its secondary structure. It is located near the subunit interface in the base of the L7/L12 stalk, and near the tRNA binding site of the peptidyltransferase center. In Paenarthrobacter aurescens (strain TC1), this protein is Large ribosomal subunit protein uL6.